A 592-amino-acid chain; its full sequence is Monocopper oxidase-like protein SKS2 (592 aa).

Positions 1 to 23 (MAATDFFFAFVFSFALIFGFSFA) are cleaved as a signal peptide. N-linked (GlcNAc...) asparagine glycans are attached at residues N61, N110, N172, N203, N259, N280, N295, N344, N364, N433, and N447. H455 contributes to the Cu cation binding site. 2 N-linked (GlcNAc...) asparagine glycosylation sites follow: N476 and N536. S564 carries the GPI-anchor amidated serine lipid modification. Positions 565 to 592 (ATKSMTNGQLILIFSMMMVLLSSFSSFC) are cleaved as a propeptide — removed in mature form.

It belongs to the multicopper oxidase family. Cu cation serves as cofactor.

Its subcellular location is the cell membrane. The protein is Monocopper oxidase-like protein SKS2 (SKS2) of Arabidopsis thaliana (Mouse-ear cress).